Reading from the N-terminus, the 267-residue chain is 4-hydroxy-tetrahydrodipicolinate reductase (267 aa).

Residues 8–13 and Asp34 each bind NAD(+); that span reads GAAGRM. Arg35 contacts NADP(+). NAD(+) contacts are provided by residues 98-100 and 122-125; these read GTT and AANF. The Proton donor/acceptor role is filled by His155. His156 provides a ligand contact to (S)-2,3,4,5-tetrahydrodipicolinate. Lys159 serves as the catalytic Proton donor. 165-166 contacts (S)-2,3,4,5-tetrahydrodipicolinate; sequence GT.

It belongs to the DapB family.

The protein localises to the cytoplasm. It catalyses the reaction (S)-2,3,4,5-tetrahydrodipicolinate + NAD(+) + H2O = (2S,4S)-4-hydroxy-2,3,4,5-tetrahydrodipicolinate + NADH + H(+). It carries out the reaction (S)-2,3,4,5-tetrahydrodipicolinate + NADP(+) + H2O = (2S,4S)-4-hydroxy-2,3,4,5-tetrahydrodipicolinate + NADPH + H(+). Its pathway is amino-acid biosynthesis; L-lysine biosynthesis via DAP pathway; (S)-tetrahydrodipicolinate from L-aspartate: step 4/4. In terms of biological role, catalyzes the conversion of 4-hydroxy-tetrahydrodipicolinate (HTPA) to tetrahydrodipicolinate. The chain is 4-hydroxy-tetrahydrodipicolinate reductase from Pseudomonas putida (strain ATCC 700007 / DSM 6899 / JCM 31910 / BCRC 17059 / LMG 24140 / F1).